The sequence spans 287 residues: Bifunctional protein FolD 2 (287 aa).

Residues 166 to 168 and Ile232 each bind NADP(+); that span reads GAS.

Belongs to the tetrahydrofolate dehydrogenase/cyclohydrolase family. In terms of assembly, homodimer.

The enzyme catalyses (6R)-5,10-methylene-5,6,7,8-tetrahydrofolate + NADP(+) = (6R)-5,10-methenyltetrahydrofolate + NADPH. It catalyses the reaction (6R)-5,10-methenyltetrahydrofolate + H2O = (6R)-10-formyltetrahydrofolate + H(+). It participates in one-carbon metabolism; tetrahydrofolate interconversion. Its function is as follows. Catalyzes the oxidation of 5,10-methylenetetrahydrofolate to 5,10-methenyltetrahydrofolate and then the hydrolysis of 5,10-methenyltetrahydrofolate to 10-formyltetrahydrofolate. This chain is Bifunctional protein FolD 2, found in Hydrogenovibrio crunogenus (strain DSM 25203 / XCL-2) (Thiomicrospira crunogena).